We begin with the raw amino-acid sequence, 167 residues long: MNTLVDLNDKVIRGYLISLVGEEGLRMIEEMPEGEVTDEEIAAKTGVLLNTVRRTLFILYENKFAICRRERDSNSGWLTYLWHLDFSDVEHQLMREKKKLLRNLKTRLEFEENNVFYVCPQGCVRLLFDEATETEFLCPMCGEDLVYYDNSRFVSALKKRVDALSSV.

Positions 8 to 90 (NDKVIRGYLI…LWHLDFSDVE (83 aa)) constitute an HTH TFE/IIEalpha-type domain.

The protein belongs to the TFE family. As to quaternary structure, monomer. Interaction with RNA polymerase subunits RpoF and RpoE is necessary for Tfe stimulatory transcription activity. Able to interact with Tbp and RNA polymerase in the absence of DNA promoter. Interacts both with the preinitiation and elongation complexes.

Functionally, transcription factor that plays a role in the activation of archaeal genes transcribed by RNA polymerase. Facilitates transcription initiation by enhancing TATA-box recognition by TATA-box-binding protein (Tbp), and transcription factor B (Tfb) and RNA polymerase recruitment. Not absolutely required for transcription in vitro, but particularly important in cases where Tbp or Tfb function is not optimal. It dynamically alters the nucleic acid-binding properties of RNA polymerases by stabilizing the initiation complex and destabilizing elongation complexes. Seems to translocate with the RNA polymerase following initiation and acts by binding to the non template strand of the transcription bubble in elongation complexes. This Methanosarcina acetivorans (strain ATCC 35395 / DSM 2834 / JCM 12185 / C2A) protein is Transcription factor E.